The primary structure comprises 193 residues: Phosphatidylglycerophosphatase and protein-tyrosine phosphatase 1 (193 aa).

The transit peptide at 1 to 31 directs the protein to the mitochondrion; the sequence is MAASAWLEAGLARVLFYPTLLYTVFRGRVGG. A Tyrosine-protein phosphatase domain is found at 37-188; that stretch reads WYHRIDHTVL…LKEFHKEIAA (152 aa). K85 carries the N6-succinyllysine modification. C132 acts as the Phosphocysteine intermediate in catalysis.

Belongs to the protein-tyrosine phosphatase family. Non-receptor class dual specificity subfamily. As to quaternary structure, interacts with STYXL1; the interaction inhibits PTPMT1 catalytic activity. Expressed in liver and in pancreatic beta cells.

The protein resides in the mitochondrion inner membrane. It carries out the reaction O-phospho-L-tyrosyl-[protein] + H2O = L-tyrosyl-[protein] + phosphate. The enzyme catalyses O-phospho-L-seryl-[protein] + H2O = L-seryl-[protein] + phosphate. The catalysed reaction is O-phospho-L-threonyl-[protein] + H2O = L-threonyl-[protein] + phosphate. It catalyses the reaction a 1,2-diacyl-sn-glycero-3-phospho-(1'-sn-glycero-3'-phosphate) + H2O = a 1,2-diacyl-sn-glycero-3-phospho-(1'-sn-glycerol) + phosphate. It carries out the reaction 1,2-di-(9Z-octadecenoyl)-sn-glycero-3-phospho-(1'-sn-glycerol-3'-phosphate) + H2O = 1,2-di-(9Z-octadecenoyl)-sn-glycero-3-phospho-(1'-sn-glycerol) + phosphate. The enzyme catalyses 1,2-dioctanoyl-sn-glycero-3-phospho-(1D-myo-inositol-5-phosphate) + H2O = 1,2-dioctanoyl-sn-glycero-3-phospho-(1D-myo-inositol) + phosphate. The catalysed reaction is a 1-acyl-2-hexanoyl-sn-glycero-3-phospho-(1D-myo-inositol-5-phosphate) + H2O = a 1-acyl-2-hexanoyl-sn-glycero-3-phospho-(1D-myo-inositol) + phosphate. It catalyses the reaction 1,2-dibutyryl-sn-glycero-3-phospho-(1D-myo-inositol-5-phosphate) + H2O = 1,2-dibutyryl-sn-glycero-3-phospho-(1D-myo-inositol) + phosphate. It functions in the pathway phospholipid metabolism; phosphatidylglycerol biosynthesis; phosphatidylglycerol from CDP-diacylglycerol: step 2/2. Its function is as follows. Lipid phosphatase which dephosphorylates phosphatidylglycerophosphate (PGP) to phosphatidylglycerol (PG). PGP is an essential intermediate in the biosynthetic pathway of cardiolipin, a mitochondrial-specific phospholipid regulating the membrane integrity and activities of the organelle. Has also been shown to display phosphatase activity toward phosphoprotein substrates, specifically mediates dephosphorylation of mitochondrial proteins, thereby playing an essential role in ATP production. Has probably a preference for proteins phosphorylated on Ser and/or Thr residues compared to proteins phosphorylated on Tyr residues. Probably involved in regulation of insulin secretion in pancreatic beta cells. May prevent intrinsic apoptosis, probably by regulating mitochondrial membrane integrity. The chain is Phosphatidylglycerophosphatase and protein-tyrosine phosphatase 1 from Rattus norvegicus (Rat).